The sequence spans 492 residues: uncharacterized protein (492 aa).

12 helical membrane passes run 13 to 33 (LGFILASVGSAIGLGNIWRFG), 42 to 62 (GAFLIPYIVALLCVGIPLMIL), 97 to 117 (FIITSYYVVIIAWCLYYLIIL), 150 to 170 (GILVSTLAVWGIVALILSAGI), 180 to 200 (IMIPFLLFLIILLVLNALTLP), 222 to 242 (VWLSAFSQIFFSLSLGFGILI), 258 to 278 (AVTVSLLNCGFSFLAGFAVFG), 320 to 340 (FGIVFFLALVFAGISSAVSIV), 359 to 379 (LLAVLALFIIISPIFTTGAGL), 391 to 411 (GYLLPIAAILEIIIAIWLFGG), 428 to 448 (VWWKYLAGVVSPIILTAVVFL), and 463 to 483 (TTYVIFGALIIPLAFVVSVIL).

This sequence belongs to the sodium:neurotransmitter symporter (SNF) (TC 2.A.22) family.

Its subcellular location is the cell membrane. Functionally, putative sodium-dependent transporter. This is an uncharacterized protein from Methanocaldococcus jannaschii (strain ATCC 43067 / DSM 2661 / JAL-1 / JCM 10045 / NBRC 100440) (Methanococcus jannaschii).